A 589-amino-acid polypeptide reads, in one-letter code: ATP-dependent lipid A-core flippase (589 aa).

Helical transmembrane passes span 29-49 (WLLV…STFL), 68-88 (ALWL…AGYI), 157-177 (VIGA…AILL), 254-274 (LSSA…LLIA), and 283-303 (LSPG…PALK). The 283-residue stretch at 32 to 314 (VVAACGALLE…LTNVQNMLQS (283 aa)) folds into the ABC transmembrane type-1 domain. An ABC transporter domain is found at 346-582 (IEFRGITARY…DGLYAYLYSM (237 aa)). An ATP-binding site is contributed by 380 to 387 (GRSGSGKS).

This sequence belongs to the ABC transporter superfamily. Lipid exporter (TC 3.A.1.106) family. Homodimer.

It is found in the cell inner membrane. The catalysed reaction is ATP + H2O + lipid A-core oligosaccharideSide 1 = ADP + phosphate + lipid A-core oligosaccharideSide 2.. In terms of biological role, involved in lipopolysaccharide (LPS) biosynthesis. Translocates lipid A-core from the inner to the outer leaflet of the inner membrane. Transmembrane domains (TMD) form a pore in the inner membrane and the ATP-binding domain (NBD) is responsible for energy generation. The chain is ATP-dependent lipid A-core flippase from Xylella fastidiosa (strain 9a5c).